We begin with the raw amino-acid sequence, 199 residues long: Recombination protein RecR (199 aa).

The segment at 58 to 73 (CSVCSNLTDIDPCPLC) adopts a C4-type zinc-finger fold. In terms of domain architecture, Toprim spans 81 to 176 (TVICVVQDPR…KATRIAHGIP (96 aa)).

It belongs to the RecR family.

In terms of biological role, may play a role in DNA repair. It seems to be involved in an RecBC-independent recombinational process of DNA repair. It may act with RecF and RecO. This chain is Recombination protein RecR, found in Ruminiclostridium cellulolyticum (strain ATCC 35319 / DSM 5812 / JCM 6584 / H10) (Clostridium cellulolyticum).